We begin with the raw amino-acid sequence, 258 residues long: MPVLTMKQLLEAGVHFGHQTRRWNPKMAEYIFTERNGIYIIDLQKTVKKMDEAYEFVKSQVQEGKIILFVGTKKQAQETIKEEAERCGMYYINQRWLGGLLTNFRTIKTRIERLKELQRMEEDGTFDVLPKKEVNLLRKEKERLLKYLGGIQNMPRIPDILYIVDPRKERNAVLEARKLGIPIVAIVDTNCDPDEIDYVIPGNDDAIRAVKLITSKIADAVIEGKEGEQFAPASEQKEEVKTQEVQEVEDSNDDVIDD.

Residues 227-258 (GEQFAPASEQKEEVKTQEVQEVEDSNDDVIDD) are disordered. Positions 235-244 (EQKEEVKTQE) are enriched in basic and acidic residues. The span at 246–258 (QEVEDSNDDVIDD) shows a compositional bias: acidic residues.

The protein belongs to the universal ribosomal protein uS2 family.

The protein is Small ribosomal subunit protein uS2 of Caldicellulosiruptor saccharolyticus (strain ATCC 43494 / DSM 8903 / Tp8T 6331).